We begin with the raw amino-acid sequence, 336 residues long: tRNA N6-adenosine threonylcarbamoyltransferase (336 aa).

Residues His-112 and His-116 each coordinate Fe cation. Substrate is bound by residues 136 to 140 (LVSGG), Asp-169, Gly-182, and Asn-276. Residue Asp-304 coordinates Fe cation.

Belongs to the KAE1 / TsaD family. It depends on Fe(2+) as a cofactor.

It is found in the cytoplasm. It catalyses the reaction L-threonylcarbamoyladenylate + adenosine(37) in tRNA = N(6)-L-threonylcarbamoyladenosine(37) in tRNA + AMP + H(+). Required for the formation of a threonylcarbamoyl group on adenosine at position 37 (t(6)A37) in tRNAs that read codons beginning with adenine. Is involved in the transfer of the threonylcarbamoyl moiety of threonylcarbamoyl-AMP (TC-AMP) to the N6 group of A37, together with TsaE and TsaB. TsaD likely plays a direct catalytic role in this reaction. The polypeptide is tRNA N6-adenosine threonylcarbamoyltransferase (Francisella tularensis subsp. novicida (strain U112)).